We begin with the raw amino-acid sequence, 293 residues long: Short-chain dehydrogenase/reductase PhomF' (293 aa).

Ile31 and Asn102 together coordinate NADP(+). The active-site Proton donor is the Ser175. Residues Tyr190, Lys194, and Ser225 each coordinate NADP(+). Residue Tyr190 is the Proton acceptor of the active site. The active-site Lowers pKa of active site Tyr is Lys194.

Belongs to the short-chain dehydrogenases/reductases (SDR) family.

Functionally, short-chain dehydrogenase/reductase; part of the gene cluster that mediates the biosynthesis of the phomopsins, a group of hexapeptide mycotoxins which infects lupins and causes lupinosis disease in livestock. The role of phomF' within the phomopsins biosynthesis pathway has still to be determined. The pathway starts with the processing of the precursor phomA by several endopeptidases including kexin proteases as well as the cluster-specific S41 family peptidase phomP1 and the oligopeptidase phomG to produce 10 identical copies of the hexapeptide Tyr-Val-Ile-Pro-Ile-Asp. After being excised from the precursor peptide, the core peptides are cyclized and modified post-translationally by enzymes encoded within the gene cluster. The timing and order of proteolysis of the phomA precursor and PTMs are still unknown. Two tyrosinase-like enzymes, phomQ1 and phomQ2, catalyze the chlorination and hydroxylation of Tyr, respectively. PhomYb, is proposed to be involved in the construction of the macrocyclic structure. The other 4 ustYa family proteins may be involved in PTMs that generate the unique structure of phomopsin A. PhomYa is required for the hydroxylation of C-beta of Tyr. PhomYc, phomYd, and phomYe are responsible for the biosynthesis of 2,3-dehydroisoleucine (dIle), 2,3-dehydroaspartic acid (dAsp), and 3,4-dehydroproline (dPro), respectively. While dIle formation by phomYc is indispensable for the installation of dAsp by phomYd, the order of the other PTMs have not been elucidated yet. Most of the biosynthetic enzymes likely have broad substrate specificity, and thus, there might be a metabolic grid from a precursor to phomopsin A. The enzyme(s) responsible for the biosynthesis of 3,4-dehydrovaline (dVal) have also not been identified yet. Finally, phomM acts as an S-adenosylmethionine-dependent alpha-N-methyltransferase that catalyzes two successive N-methylation reactions, converting N-desmethyl-phomopsin A to phomopsin A and phomopsin A further to an N,N-dimethylated congener called phomopsin E. This chain is Short-chain dehydrogenase/reductase PhomF', found in Diaporthe leptostromiformis (Lupinosis disease fungus).